The following is a 146-amino-acid chain: UPF0178 protein LMOf2365_1475 (146 aa).

It belongs to the UPF0178 family.

The polypeptide is UPF0178 protein LMOf2365_1475 (Listeria monocytogenes serotype 4b (strain F2365)).